The primary structure comprises 255 residues: tRNA (guanine-N(1)-)-methyltransferase (255 aa).

S-adenosyl-L-methionine contacts are provided by residues G113 and I133 to L138.

It belongs to the RNA methyltransferase TrmD family. As to quaternary structure, homodimer.

The protein localises to the cytoplasm. It catalyses the reaction guanosine(37) in tRNA + S-adenosyl-L-methionine = N(1)-methylguanosine(37) in tRNA + S-adenosyl-L-homocysteine + H(+). Functionally, specifically methylates guanosine-37 in various tRNAs. In Shigella flexneri serotype 5b (strain 8401), this protein is tRNA (guanine-N(1)-)-methyltransferase.